Here is a 665-residue protein sequence, read N- to C-terminus: Beta-galactosidase LacZ (665 aa).

A substrate-binding site is contributed by arginine 110. Zn(2+) is bound at residue cysteine 114. Asparagine 148 serves as a coordination point for substrate. The active-site Proton donor is glutamate 149. 3 residues coordinate Zn(2+): cysteine 157, cysteine 159, and cysteine 162. Residue glutamate 303 is the Nucleophile of the active site. Substrate is bound by residues tryptophan 311 and 351–354; that span reads EKFH.

The protein belongs to the glycosyl hydrolase 42 family.

It catalyses the reaction Hydrolysis of terminal non-reducing beta-D-galactose residues in beta-D-galactosides.. The protein is Beta-galactosidase LacZ of Heyndrickxia coagulans (Weizmannia coagulans).